The following is a 295-amino-acid chain: Glycine--tRNA ligase alpha subunit (295 aa).

This sequence belongs to the class-II aminoacyl-tRNA synthetase family. Tetramer of two alpha and two beta subunits.

The protein localises to the cytoplasm. It carries out the reaction tRNA(Gly) + glycine + ATP = glycyl-tRNA(Gly) + AMP + diphosphate. The protein is Glycine--tRNA ligase alpha subunit of Shouchella clausii (strain KSM-K16) (Alkalihalobacillus clausii).